The following is a 1167-amino-acid chain: RNA-directed RNA polymerase (1167 aa).

The region spanning 553–735 (LTYGILAEAT…KALASYTGLE (183 aa)) is the RdRp catalytic domain.

This sequence belongs to the reoviridae RNA-directed RNA polymerase family. Interacts with VP3 (Potential). Interacts with VP2 (Potential). Interacts with NSP5; this interaction is probably necessary for the formation of functional virus factories.

Its subcellular location is the virion. It catalyses the reaction RNA(n) + a ribonucleoside 5'-triphosphate = RNA(n+1) + diphosphate. In terms of biological role, RNA-directed RNA polymerase that is involved in both transcription and genome replication. Together with VP3 capping enzyme, forms an enzyme complex positioned near the channels situated at each of the five-fold vertices of the core. Following infection, the outermost layer of the virus is lost, leaving a double-layered particle (DLP) made up of the core and VP6 shell. VP1 then catalyzes the transcription of fully conservative plus-strand genomic RNAs that are extruded through the DLP's channels into the cytoplasm where they function as mRNAs for translation of viral proteins. One copy of each of the viral (+)RNAs is also recruited during core assembly, together with newly synthesized polymerase complexes and VP2. The polymerase of these novo-formed particles catalyzes the synthesis of complementary minus-strands leading to dsDNA formation. To do so, the polymerase specifically recognizes conserved 3' sequence(s) in plus-strand RNA templates. Once dsRNA synthesis is complete, the polymerase switches to the transcriptional mode, thus providing secondary transcription. This is RNA-directed RNA polymerase from Rotavirus X (isolate RVX/Human/Bangladesh/NADRV-B219/2002/GXP[X]) (RV ADRV-N).